The primary structure comprises 256 residues: Proteasome subunit alpha (256 aa).

Positions 235–256 (ELDSNGSDGNGDAPELNGGSSD) are disordered.

The protein belongs to the peptidase T1A family. The 20S proteasome core is composed of 14 alpha and 14 beta subunits that assemble into four stacked heptameric rings, resulting in a barrel-shaped structure. The two inner rings, each composed of seven catalytic beta subunits, are sandwiched by two outer rings, each composed of seven alpha subunits. The catalytic chamber with the active sites is on the inside of the barrel. Has a gated structure, the ends of the cylinder being occluded by the N-termini of the alpha-subunits. Is capped by the proteasome-associated ATPase, ARC.

Its subcellular location is the cytoplasm. Its pathway is protein degradation; proteasomal Pup-dependent pathway. The formation of the proteasomal ATPase ARC-20S proteasome complex, likely via the docking of the C-termini of ARC into the intersubunit pockets in the alpha-rings, may trigger opening of the gate for substrate entry. Interconversion between the open-gate and close-gate conformations leads to a dynamic regulation of the 20S proteasome proteolysis activity. Its function is as follows. Component of the proteasome core, a large protease complex with broad specificity involved in protein degradation. The protein is Proteasome subunit alpha of Mycolicibacterium paratuberculosis (strain ATCC BAA-968 / K-10) (Mycobacterium paratuberculosis).